A 128-amino-acid polypeptide reads, in one-letter code: Iron-sulfur cluster insertion protein ErpA (128 aa).

Iron-sulfur cluster-binding residues include C56, C120, and C122.

It belongs to the HesB/IscA family. In terms of assembly, homodimer. The cofactor is iron-sulfur cluster.

Its function is as follows. Required for insertion of 4Fe-4S clusters for at least IspG. This Xanthomonas oryzae pv. oryzae (strain MAFF 311018) protein is Iron-sulfur cluster insertion protein ErpA.